We begin with the raw amino-acid sequence, 189 residues long: Threonylcarbamoyl-AMP synthase (189 aa).

The region spanning 9–189 (ASAQRKLSVY…IDGETGKRLR (181 aa)) is the YrdC-like domain.

It belongs to the SUA5 family. TsaC subfamily.

The protein resides in the cytoplasm. The catalysed reaction is L-threonine + hydrogencarbonate + ATP = L-threonylcarbamoyladenylate + diphosphate + H2O. Functionally, required for the formation of a threonylcarbamoyl group on adenosine at position 37 (t(6)A37) in tRNAs that read codons beginning with adenine. Catalyzes the conversion of L-threonine, HCO(3)(-)/CO(2) and ATP to give threonylcarbamoyl-AMP (TC-AMP) as the acyladenylate intermediate, with the release of diphosphate. This is Threonylcarbamoyl-AMP synthase from Neisseria meningitidis serogroup C (strain 053442).